We begin with the raw amino-acid sequence, 2072 residues long: Protein still life, isoform SIF type 1 (2072 aa).

Gly-2 carries the N-myristoyl glycine lipid modification. Residues Arg-29–Ser-147 enclose the WH1 domain. Disordered regions lie at residues Ser-153 to Cys-188, Asp-245 to Thr-284, Glu-327 to Asp-355, Asn-459 to Pro-486, Glu-502 to Ser-576, Ala-618 to Arg-655, and Ser-699 to Ala-747. Residues Val-275–Thr-284 are compositionally biased toward polar residues. Low complexity-rich tracts occupy residues Ser-338–Thr-351, Asn-459–Arg-476, and Ser-522–Arg-553. Over residues Ala-564 to Ser-576 the composition is skewed to polar residues. The segment covering Ile-634–Arg-655 has biased composition (basic and acidic residues). Residues Ser-732 to Gly-743 show a composition bias toward polar residues. Residues Thr-840–Phe-958 form the PH domain. The disordered stretch occupies residues Gly-1088 to Pro-1119. Residues Ser-1100–Asn-1114 show a composition bias toward low complexity. The RBD domain occupies Lys-1121–Tyr-1188. The PDZ domain occupies Gln-1204 to Thr-1293. Positions Ala-1403 to Ala-1424 are disordered. The segment covering Ser-1410 to Ala-1424 has biased composition (low complexity). Residues Lys-1436 to Met-1630 enclose the DH domain. Disordered regions lie at residues Met-1803–Thr-1832, His-1844–Val-2039, and Pro-2051–Asn-2072. Low complexity-rich tracts occupy residues Gly-1811–Met-1821 and Gln-1926–His-1943. Over residues His-1970–Glu-1984 the composition is skewed to basic and acidic residues. The span at Leu-2007–Ser-2022 shows a compositional bias: low complexity. The span at Gln-2023–Pro-2032 shows a compositional bias: polar residues.

Expressed in both larval and adult brains, mainly in a subset of neurons but not in glia. In the adult eye is expressed in the two primary pigment cells in the subapical region of the eye. Also present in photoreceptors.

The protein localises to the synapse. Regulates synaptic differentiation through the organization of actin cytoskeleton possibly by activating Rho-like GTPases. Is likely a factor in the cascade of Rac1 or Cdc42 in the neurons. May play a role in maintaining proper septate junction functions. Required for eye development and most likely affects corneal lens-formation. The protein is Protein still life, isoform SIF type 1 (sif) of Drosophila melanogaster (Fruit fly).